We begin with the raw amino-acid sequence, 245 residues long: MSSESEKDKERLIQAAKMFFFHVQDLASVINTLTELFSRSMNTQILLMAVKNNSYIKDFFEQMLKIFKEMQSVVDARHDKIQKESLCSKVAMAMCSVVQKSTNVEELHQSAKEVFKSAHTPVIISVLNSSNILGSLESSLSHLMKFPIMNLQLSDFYTEDTKEQSDVTTSERTRSPPGSSKTTMIDTLKKLQDVLKTEDSKNPTKSAADLLEQIVKAMGPILEILQKAIKTMEMNISVFKKASDK.

The segment covering 162-174 (KEQSDVTTSERTR) has biased composition (basic and acidic residues). Residues 162–183 (KEQSDVTTSERTRSPPGSSKTT) are disordered.

This is an uncharacterized protein from Homo sapiens (Human).